A 104-amino-acid polypeptide reads, in one-letter code: Small ribosomal subunit protein bS16 (104 aa).

It belongs to the bacterial ribosomal protein bS16 family.

This is Small ribosomal subunit protein bS16 from Wolbachia pipientis subsp. Culex pipiens (strain wPip).